Here is a 1010-residue protein sequence, read N- to C-terminus: MRLFLLLAFNALMLLETHGFTDETDRQALLQFKSQVSEDKRVVLSSWNHSFPLCNWKGVTCGRKNKRVTHLELGRLQLGGVISPSIGNLSFLVSLDLYENFFGGTIPQEVGQLSRLEYLDMGINYLRGPIPLGLYNCSRLLNLRLDSNRLGGSVPSELGSLTNLVQLNLYGNNMRGKLPTSLGNLTLLEQLALSHNNLEGEIPSDVAQLTQIWSLQLVANNFSGVFPPALYNLSSLKLLGIGYNHFSGRLRPDLGILLPNLLSFNMGGNYFTGSIPTTLSNISTLERLGMNENNLTGSIPTFGNVPNLKLLFLHTNSLGSDSSRDLEFLTSLTNCTQLETLGIGRNRLGGDLPISIANLSAKLVTLDLGGTLISGSIPYDIGNLINLQKLILDQNMLSGPLPTSLGKLLNLRYLSLFSNRLSGGIPAFIGNMTMLETLDLSNNGFEGIVPTSLGNCSHLLELWIGDNKLNGTIPLEIMKIQQLLRLDMSGNSLIGSLPQDIGALQNLGTLSLGDNKLSGKLPQTLGNCLTMESLFLEGNLFYGDIPDLKGLVGVKEVDLSNNDLSGSIPEYFASFSKLEYLNLSFNNLEGKVPVKGIFENATTVSIVGNNDLCGGIMGFQLKPCLSQAPSVVKKHSSRLKKVVIGVSVGITLLLLLFMASVTLIWLRKRKKNKETNNPTPSTLEVLHEKISYGDLRNATNGFSSSNMVGSGSFGTVYKALLLTEKKVVAVKVLNMQRRGAMKSFMAECESLKDIRHRNLVKLLTACSSIDFQGNEFRALIYEFMPNGSLDMWLHPEEVEEIHRPSRTLTLLERLNIAIDVASVLDYLHVHCHEPIAHCDLKPSNVLLDDDLTAHVSDFGLARLLLKFDEESFFNQLSSAGVRGTIGYAAPEYGVGGQPSINGDVYSFGILLLEMFTGKRPTNELFGGNFTLNSYTKSALPERILDIVDESILHIGLRVGFPVVECLTMVFEVGLRCCEESPMNRLATSIVVKELISIRERFFKASRTTWR.

Positions methionine 1–glycine 19 are cleaved as a signal peptide. Topologically, residues phenylalanine 20–glycine 645 are extracellular. Residues asparagine 48 and asparagine 88 are each glycosylated (N-linked (GlcNAc...) asparagine). 10 LRR repeats span residues leucine 89–leucine 113, serine 114–cysteine 137, arginine 139–leucine 161, threonine 162–leucine 185, threonine 186–leucine 209, glutamine 211–leucine 233, serine 234–leucine 258, proline 259–isoleucine 282, serine 283–asparagine 307, and leucine 310–threonine 333. N-linked (GlcNAc...) asparagine glycosylation occurs at asparagine 136. The N-linked (GlcNAc...) asparagine glycan is linked to asparagine 184. Residues asparagine 221 and asparagine 232 are each glycosylated (N-linked (GlcNAc...) asparagine). Residues asparagine 281 and asparagine 294 are each glycosylated (N-linked (GlcNAc...) asparagine). N-linked (GlcNAc...) asparagine glycosylation is found at asparagine 334 and asparagine 358. 11 LRR repeats span residues cysteine 335 to leucine 359, alanine 361 to leucine 384, isoleucine 385 to leucine 408, asparagine 410 to methionine 432, threonine 433 to asparagine 455, serine 457 to isoleucine 480, glutamine 481 to leucine 504, glutamine 505 to cysteine 528, threonine 530 to leucine 551, valine 552 to serine 574, and phenylalanine 575 to asparagine 600. Residues asparagine 431, asparagine 455, and asparagine 470 are each glycosylated (N-linked (GlcNAc...) asparagine). Residues asparagine 582 and asparagine 600 are each glycosylated (N-linked (GlcNAc...) asparagine). Residues valine 646–leucine 666 form a helical membrane-spanning segment. Residues arginine 667–arginine 1010 lie on the Cytoplasmic side of the membrane. Residue threonine 699 is modified to Phosphothreonine. The Protein kinase domain maps to phenylalanine 702–phenylalanine 1002. Residues valine 708 to valine 716 and lysine 731 contribute to the ATP site. 2 positions are modified to phosphotyrosine: tyrosine 781 and tyrosine 826. Aspartate 839 functions as the Proton acceptor in the catalytic mechanism. Phosphotyrosine is present on tyrosine 887.

The protein belongs to the protein kinase superfamily. Ser/Thr protein kinase family.

It localises to the cell membrane. It carries out the reaction L-seryl-[protein] + ATP = O-phospho-L-seryl-[protein] + ADP + H(+). It catalyses the reaction L-threonyl-[protein] + ATP = O-phospho-L-threonyl-[protein] + ADP + H(+). This chain is Probable LRR receptor-like serine/threonine-protein kinase At3g47570, found in Arabidopsis thaliana (Mouse-ear cress).